Consider the following 84-residue polypeptide: GTP cyclohydrolase 1 feedback regulatory protein (84 aa).

This sequence belongs to the GFRP family. In terms of assembly, homopentamer. Forms a complex with GCH1 where a GCH1 homodecamer is sandwiched by two GFRP homopentamers.

It is found in the nucleus. The protein localises to the nucleus membrane. It localises to the cytoplasm. Its subcellular location is the cytosol. Functionally, mediates tetrahydrobiopterin inhibition of GTP cyclohydrolase 1. This Xenopus tropicalis (Western clawed frog) protein is GTP cyclohydrolase 1 feedback regulatory protein (gchfr).